The sequence spans 897 residues: Serine/threonine-protein kinase ATG1 (897 aa).

Residues 24-325 (YTAEKEIGKG…FEEFFANKVV (302 aa)) enclose the Protein kinase domain. ATP is bound by residues 30-38 (IGKGSFATV) and Lys54. Ser34 is modified (phosphoserine). Phosphothreonine is present on Thr129. The active-site Proton acceptor is Asp172. At Thr226 the chain carries Phosphothreonine; by autocatalysis. Ser304, Ser365, and Ser390 each carry phosphoserine. The LIR motif lies at 429-432 (YVVV). Residues 490 to 509 (LLRATSSSSGGSDGSRRPSL) form a disordered region. Residues Ser508 and Ser515 each carry the phosphoserine; by PKA modification. Ser533, Ser551, and Ser552 each carry phosphoserine. Thr590 carries the phosphothreonine modification. Phosphoserine is present on residues Ser621, Ser635, Ser638, Ser647, Ser677, Ser680, Ser683, Ser769, and Ser783. The interval 880-886 (DSIANRL) is required for Cvt trafficking.

This sequence belongs to the protein kinase superfamily. Ser/Thr protein kinase family. APG1/unc-51/ULK1 subfamily. As to quaternary structure, homodimer. Dimerization requires the presence of ATG13. Forms a ternary complex with ATG13 and ATG17. Also interacts with ATG11. Post-translationally, autophosphorylated at Thr-226 and Ser-390. The phosphorylation state may play a role in the induction of protein degradation upon starvation. Phosphorylation at Thr-226 within the activation loop is required for protein kinase activity whereas phosphorylation at Ser-34 leads to inhibition of kinase activity. Phosphorylation of Ser-508 and Ser-515 by PKA is required to induce autophagy but not for kinase activity.

It localises to the cytoplasm. The protein resides in the preautophagosomal structure membrane. The enzyme catalyses L-seryl-[protein] + ATP = O-phospho-L-seryl-[protein] + ADP + H(+). The catalysed reaction is L-threonyl-[protein] + ATP = O-phospho-L-threonyl-[protein] + ADP + H(+). Its activity is regulated as follows. Activated by hypophosphorylated form of ATG13 (present in nitrogen starvation conditions). Also activated by autophopsphorylation of Thr-226 and inhibited by phosphorylation of Ser-34. In terms of biological role, serine/threonine protein kinase involved in the cytoplasm to vacuole transport (Cvt) and found to be essential in autophagy, where it is required for the formation of autophagosomes. Involved in the clearance of protein aggregates which cannot be efficiently cleared by the proteasome. Required for selective autophagic degradation of the nucleus (nucleophagy) as well as for mitophagy which contributes to regulate mitochondrial quantity and quality by eliminating the mitochondria to a basal level to fulfill cellular energy requirements and preventing excess ROS production. Also involved in endoplasmic reticulum-specific autophagic process, in selective removal of ER-associated degradation (ERAD) substrates. Plays a key role in ATG9 and ATG23 cycling through the pre-autophagosomal structure and is necessary to promote ATG18 binding to ATG9 through phosphorylation of ATG9. Catalyzes phosphorylation of ATG4, decreasing the interaction between ATG4 and ATG8 and impairing deconjugation of PE-conjugated forms of ATG8. Finally, ATG1 is also required for the maintenance of cell viability under starvation and for glycogen storage during stationary phase. Plays a role in genome stability through suppression of abnormal mitosis under starvation, and in regulation of filamentous growth. The polypeptide is Serine/threonine-protein kinase ATG1 (Saccharomyces cerevisiae (strain YJM789) (Baker's yeast)).